The sequence spans 538 residues: Bifunctional purine biosynthesis protein PurH (538 aa).

The region spanning 8–158 (FPIPDLHRVR…KNHVYTGVIT (151 aa)) is the MGS-like domain.

It belongs to the PurH family.

It carries out the reaction (6R)-10-formyltetrahydrofolate + 5-amino-1-(5-phospho-beta-D-ribosyl)imidazole-4-carboxamide = 5-formamido-1-(5-phospho-D-ribosyl)imidazole-4-carboxamide + (6S)-5,6,7,8-tetrahydrofolate. The enzyme catalyses IMP + H2O = 5-formamido-1-(5-phospho-D-ribosyl)imidazole-4-carboxamide. It functions in the pathway purine metabolism; IMP biosynthesis via de novo pathway; 5-formamido-1-(5-phospho-D-ribosyl)imidazole-4-carboxamide from 5-amino-1-(5-phospho-D-ribosyl)imidazole-4-carboxamide (10-formyl THF route): step 1/1. It participates in purine metabolism; IMP biosynthesis via de novo pathway; IMP from 5-formamido-1-(5-phospho-D-ribosyl)imidazole-4-carboxamide: step 1/1. This Bartonella henselae (strain ATCC 49882 / DSM 28221 / CCUG 30454 / Houston 1) (Rochalimaea henselae) protein is Bifunctional purine biosynthesis protein PurH.